Reading from the N-terminus, the 530-residue chain is MLGSERAVVEEWLSEFKALPDTQITSYAATLHRKKALVPALYKVIQDSNNELLEPVCHQLFELYRSSEVRLKRFTLQFLPELIWVYLRLTVSRDRQSNGCIEALLLGIYNLEIADKDGNNKVLSFTIPSLSKPSIYHEPSTIGSMALTEGALCQHDLIRVVYSDLHPQRETFTAQNRFEVLSFLMLCYNSAIVYMPASSYQSLCRMGSRVCVSGFPRQHEKQWKELCGRIVLDPEFMVQLLTGVYYAMYNGQWDLGQEVLDDIIYRAQLELFSQPLLVANAMKNSLPFDAPDSSQEGQKVLKVEVTPTVPRISRTAITTASIRRHRWRREGAEGLNGGEESLNMNDADEGFSSGASLSSQPHGTKPPSSSQRGSLRKVATGRSAKDKETALAIKSNESPRDSVVGKQFVQQQADLSIDSVELTPMKKHLSLPAGQVVPKTNSLSLIRTASASSSKSFDYVNGGQASTSIGVGTEGVTNLAATNANRYSTISLQEDRLGHAGEGKELLSPGAPLTKQSRSPSFNMQLISQV.

Residues Thr30 and Thr306 each carry the phosphothreonine modification. A phosphoserine mark is found at Ser321 and Ser341. The segment at 328-404 is disordered; that stretch reads RREGAEGLNG…SNESPRDSVV (77 aa). Residues 353-373 show a composition bias toward polar residues; that stretch reads SGASLSSQPHGTKPPSSSQRG. Ser430, Ser442, Ser444, and Ser491 each carry phosphoserine. Residues 502-530 are disordered; sequence EGKELLSPGAPLTKQSRSPSFNMQLISQV. Polar residues predominate over residues 514–530; that stretch reads TKQSRSPSFNMQLISQV.

This sequence belongs to the Hyccin family. As to quaternary structure, component of a phosphatidylinositol 4-kinase (PI4K) complex, composed of PI4KA, EFR3 (EFR3A or EFR3B), TTC7 (TTC7A or TTC7B) and HYCC (HYCC1 or HYCC2). In terms of tissue distribution, expressed in the central nervous system. Expressed at much lower level in oligodendrocytes than in neurons.

It localises to the cytoplasm. It is found in the cytosol. Its subcellular location is the cell membrane. In terms of biological role, component of a complex required to localize phosphatidylinositol 4-kinase (PI4K) to the plasma membrane. The chain is Hyccin 2 (Hycc2) from Mus musculus (Mouse).